Here is a 505-residue protein sequence, read N- to C-terminus: Succinyl-CoA:acetate CoA-transferase (505 aa).

A CoA-binding site is contributed by 269–273 (GVGNV). The active-site 5-glutamyl coenzyme A thioester intermediate is the Glu294. Residues Ile364, Asn384, Gly388, and Lys408 each coordinate CoA.

It belongs to the acetyl-CoA hydrolase/transferase family. Homodimer.

It carries out the reaction succinyl-CoA + acetate = succinate + acetyl-CoA. The protein operates within metabolic intermediate biosynthesis; acetyl-CoA biosynthesis. With respect to regulation, subject to competitive inhibition by coenzyme A (CoA). Its function is as follows. Utilizes succinyl-CoA to convert toxic acetate to acetyl-CoA and succinate. Required for growth on acetic acid and for resistance to high levels of acetic acid. Also has low activity with acetoacetate as substrate. The sequence is that of Succinyl-CoA:acetate CoA-transferase from Acetobacter aceti.